We begin with the raw amino-acid sequence, 1045 residues long: MDIS1-interacting receptor like kinase 2 (1045 aa).

The signal sequence occupies residues 1-43 (MNKTNPERKISLTSFKERMACKEKPRDLQVLLIISIVLSCSFA). Over 44–709 (VSATVEEANA…SKKSHKDRNL (666 aa)) the chain is Extracellular. N63, N77, N99, and N119 each carry an N-linked (GlcNAc...) asparagine glycan. LRR repeat units lie at residues 92 to 116 (LGSI…PFSS), 117 to 140 (LPNL…LWGR), 141 to 165 (FSKL…LGDL), 166 to 189 (SNLD…IGRL), 191 to 212 (KVTE…SFGN), 213 to 237 (LTKL…IGNL), 238 to 260 (PNLR…SFGN), 262 to 285 (KNVT…IGNM), 286 to 309 (TALD…LGNI), 311 to 333 (TLAV…LGEM), 334 to 356 (ESMI…SFGK), 357 to 381 (LTAL…IANS), 383 to 405 (ELTV…ICRG), 406 to 429 (GKLE…LRDC), 431 to 452 (SLIR…AFGV), 453 to 476 (YPTL…NWEQ), 477 to 501 (SQKL…IWNM), 502 to 525 (TQLS…ISNI), 527 to 549 (RISK…IRLL), 550 to 573 (TNLE…LNNL), 575 to 597 (RLYY…LTKL), 598 to 620 (SQLQ…QFRS), 621 to 644 (LQNL…SFKD), and 646 to 670 (LALT…AFRN). N-linked (GlcNAc...) asparagine glycosylation is found at N179 and N212. Residues N249, N263, and N284 are each glycosylated (N-linked (GlcNAc...) asparagine). N-linked (GlcNAc...) asparagine glycosylation is present at N323. N380, N393, and N410 each carry an N-linked (GlcNAc...) asparagine glycan. N-linked (GlcNAc...) asparagine glycosylation is found at N487 and N500. The N-linked (GlcNAc...) asparagine glycan is linked to N580. An N-linked (GlcNAc...) asparagine glycan is attached at N633. N-linked (GlcNAc...) asparagine glycosylation is present at N687. A helical transmembrane segment spans residues 710–730 (IIYILVPIIGAIIILSVCAGI). Residues 731 to 1045 (FICFRKRTKQ…TMLSISTAFS (315 aa)) are Cytoplasmic-facing. T772 is modified (phosphothreonine). One can recognise a Protein kinase domain in the interval 775–1045 (FDPKYLIGTG…TMLSISTAFS (271 aa)). ATP contacts are provided by residues 781-789 (IGTGGHGKV) and K802. Y853 and Y892 each carry phosphotyrosine. D905 acts as the Proton acceptor in catalysis. S938 bears the Phosphoserine mark. Residues Y946 and Y953 each carry the phosphotyrosine modification.

The protein belongs to the protein kinase superfamily. Ser/Thr protein kinase family. In terms of assembly, interacts with MDIS1 and LURE1.2. Binds to SCOOP12; this interaction triggers the formation of complex between MIK2 and the BAK1/SERK3 and SERK4 coreceptors. In terms of tissue distribution, expressed in pollen tubes. Highly expressed in shoots, roots and leaves.

The protein resides in the cell membrane. It carries out the reaction L-seryl-[protein] + ATP = O-phospho-L-seryl-[protein] + ADP + H(+). The catalysed reaction is L-threonyl-[protein] + ATP = O-phospho-L-threonyl-[protein] + ADP + H(+). In terms of biological role, acts as a receptor of SCOOP peptides from Brassicaceae plants regulating multiple processing including plant growth, development and stress responses. Perception of SCOOP peptides induces the association of MIK2 with the coreceptors BAK1/SERK3 and SERK4 and relays the signaling through the activation of receptor-like cytosolic kinases (RLCKs) BIK1 and PBL1. Also able to detect SCOOP-like proteins (SCOOPL) present in fungal Fusarium spp. and bacterial Comamonadaceae to elicit various immune responses, including growth inhibition, ROS production, calcium Ca(2+) influx, MAPK activation and MYB51 promoter activation in roots, thus being required for resistance to several root pathogens. Involved in the pollen tube perception of the female signal. Required to trigger defense responses toward generalist herbivores such as Spodoptera littoralis, probably via the activation of jasmonate and indole glucosinolate biosynthesis. The sequence is that of MDIS1-interacting receptor like kinase 2 from Arabidopsis thaliana (Mouse-ear cress).